Here is a 419-residue protein sequence, read N- to C-terminus: Serine hydroxymethyltransferase (419 aa).

(6S)-5,6,7,8-tetrahydrofolate-binding positions include Leu121 and 125-127; that span reads GHL. Position 230 is an N6-(pyridoxal phosphate)lysine (Lys230). Position 355 to 357 (355 to 357) interacts with (6S)-5,6,7,8-tetrahydrofolate; the sequence is SPF.

It belongs to the SHMT family. Homodimer. Pyridoxal 5'-phosphate is required as a cofactor.

Its subcellular location is the cytoplasm. It carries out the reaction (6R)-5,10-methylene-5,6,7,8-tetrahydrofolate + glycine + H2O = (6S)-5,6,7,8-tetrahydrofolate + L-serine. It participates in one-carbon metabolism; tetrahydrofolate interconversion. Its pathway is amino-acid biosynthesis; glycine biosynthesis; glycine from L-serine: step 1/1. In terms of biological role, catalyzes the reversible interconversion of serine and glycine with tetrahydrofolate (THF) serving as the one-carbon carrier. This reaction serves as the major source of one-carbon groups required for the biosynthesis of purines, thymidylate, methionine, and other important biomolecules. Also exhibits THF-independent aldolase activity toward beta-hydroxyamino acids, producing glycine and aldehydes, via a retro-aldol mechanism. This is Serine hydroxymethyltransferase from Alkalilimnicola ehrlichii (strain ATCC BAA-1101 / DSM 17681 / MLHE-1).